A 274-amino-acid polypeptide reads, in one-letter code: Bis(5'-nucleosyl)-tetraphosphatase, symmetrical (274 aa).

This sequence belongs to the Ap4A hydrolase family.

The catalysed reaction is P(1),P(4)-bis(5'-adenosyl) tetraphosphate + H2O = 2 ADP + 2 H(+). Functionally, hydrolyzes diadenosine 5',5'''-P1,P4-tetraphosphate to yield ADP. The protein is Bis(5'-nucleosyl)-tetraphosphatase, symmetrical of Shewanella sp. (strain MR-4).